A 500-amino-acid polypeptide reads, in one-letter code: Lysine--tRNA ligase (500 aa).

The Mg(2+) site is built by glutamate 410 and glutamate 417.

This sequence belongs to the class-II aminoacyl-tRNA synthetase family. Homodimer. The cofactor is Mg(2+).

The protein resides in the cytoplasm. The catalysed reaction is tRNA(Lys) + L-lysine + ATP = L-lysyl-tRNA(Lys) + AMP + diphosphate. In Mycoplasma capricolum subsp. capricolum (strain California kid / ATCC 27343 / NCTC 10154), this protein is Lysine--tRNA ligase.